We begin with the raw amino-acid sequence, 140 residues long: Actin-depolymerizing factor 10 (140 aa).

Serine 6 carries the post-translational modification Phosphoserine. Residues 7–139 enclose the ADF-H domain; the sequence is GMHVSDECKL…SLDIIKGRVN (133 aa).

It belongs to the actin-binding proteins ADF family.

It is found in the cytoplasm. The protein resides in the cytoskeleton. Its function is as follows. Actin-depolymerizing protein. Severs actin filaments (F-actin) and binds to actin monomers. The chain is Actin-depolymerizing factor 10 (ADF10) from Arabidopsis thaliana (Mouse-ear cress).